Consider the following 560-residue polypeptide: Protein DA1-related 7 (560 aa).

3 consecutive UIM domains span residues 43–62 (SEAD…QETS), 92–111 (EEDQ…KGKS), and 155–174 (NEDA…KGQI). The LIM zinc-binding domain maps to 199-269 (SICDGCKSAI…HVCKKKFPGR (71 aa)).

In terms of assembly, interacts with ubiquitin.

Functionally, ubiquitin receptor that probably regulates developmental process. The protein is Protein DA1-related 7 (DAR7) of Arabidopsis thaliana (Mouse-ear cress).